The following is a 569-amino-acid chain: Proline--tRNA ligase (569 aa).

This sequence belongs to the class-II aminoacyl-tRNA synthetase family. ProS type 1 subfamily. As to quaternary structure, homodimer.

It localises to the cytoplasm. The enzyme catalyses tRNA(Pro) + L-proline + ATP = L-prolyl-tRNA(Pro) + AMP + diphosphate. Its function is as follows. Catalyzes the attachment of proline to tRNA(Pro) in a two-step reaction: proline is first activated by ATP to form Pro-AMP and then transferred to the acceptor end of tRNA(Pro). As ProRS can inadvertently accommodate and process non-cognate amino acids such as alanine and cysteine, to avoid such errors it has two additional distinct editing activities against alanine. One activity is designated as 'pretransfer' editing and involves the tRNA(Pro)-independent hydrolysis of activated Ala-AMP. The other activity is designated 'posttransfer' editing and involves deacylation of mischarged Ala-tRNA(Pro). The misacylated Cys-tRNA(Pro) is not edited by ProRS. This is Proline--tRNA ligase from Lactiplantibacillus plantarum (strain ATCC BAA-793 / NCIMB 8826 / WCFS1) (Lactobacillus plantarum).